We begin with the raw amino-acid sequence, 223 residues long: Ubiquitin carboxyl-terminal hydrolase isozyme L1 (223 aa).

Position 1 is an N-acetylmethionine (M1). In terms of domain architecture, UCH catalytic spans 2-221 (QLKPMEINPE…VRFSAVALCK (220 aa)). Residues 5-10 (PMEINP) form an interaction with ubiquitin region. Residue C90 is the Nucleophile of the active site. S125 carries the phosphoserine modification. The Proton donor role is filled by H161. The segment at 211-216 (EVRFSA) is interaction with ubiquitin. The S-farnesyl cysteine moiety is linked to residue C220. Residues 221–223 (KAA) constitute a propeptide, removed in mature form.

The protein belongs to the peptidase C12 family. As to quaternary structure, monomer. Homodimer. Interacts with COPS5 and SNCA. O-glycosylated. Expressed in brain, where it is found in neurons but not in oligodendrocytes or astrocytes. Found in the ganglion cell layer and the inner nuclear layer of the retina (at protein level). Expressed in brain and testis. In the brain, expression is at its lowest in replaceable neurons of hippocampus and olfactory bulb. Highly expressed in senescent pituitary. In skeletal muscle, primarily expressed in oxidative muscle fibers.

The protein localises to the cytoplasm. Its subcellular location is the endoplasmic reticulum membrane. It catalyses the reaction Thiol-dependent hydrolysis of ester, thioester, amide, peptide and isopeptide bonds formed by the C-terminal Gly of ubiquitin (a 76-residue protein attached to proteins as an intracellular targeting signal).. Functionally, deubiquitinase that plays a role in the regulation of several processes such as maintenance of synaptic function, cardiac function, inflammatory response or osteoclastogenesis. Abrogates the ubiquitination of multiple proteins including WWTR1/TAZ, EGFR, HIF1A and beta-site amyloid precursor protein cleaving enzyme 1/BACE1. In addition, recognizes and hydrolyzes a peptide bond at the C-terminal glycine of ubiquitin to maintain a stable pool of monoubiquitin that is a key requirement for the ubiquitin-proteasome and the autophagy-lysosome pathways. Regulates amyloid precursor protein/APP processing by promoting BACE1 degradation resulting in decreased amyloid beta production. Plays a role in the immune response by regulating the ability of MHC I molecules to reach cross-presentation compartments competent for generating Ag-MHC I complexes. Mediates the 'Lys-48'-linked deubiquitination of the transcriptional coactivator WWTR1/TAZ leading to its stabilization and inhibition of osteoclastogenesis. Deubiquitinates and stabilizes epidermal growth factor receptor EGFR to prevent its degradation and to activate its downstream mediators. Modulates oxidative activity in skeletal muscle by regulating key mitochondrial oxidative proteins. Enhances the activity of hypoxia-inducible factor 1-alpha/HIF1A by abrogateing its VHL E3 ligase-mediated ubiquitination and consequently inhibiting its degradation. This Mus musculus (Mouse) protein is Ubiquitin carboxyl-terminal hydrolase isozyme L1 (Uchl1).